Reading from the N-terminus, the 276-residue chain is NAD kinase (276 aa).

Residue D68 is the Proton acceptor of the active site. NAD(+) is bound by residues 68–69 (DG), R73, 138–139 (NE), K149, D168, 179–184 (TAYSLS), and Q237.

Belongs to the NAD kinase family. It depends on a divalent metal cation as a cofactor.

The protein localises to the cytoplasm. It catalyses the reaction NAD(+) + ATP = ADP + NADP(+) + H(+). Involved in the regulation of the intracellular balance of NAD and NADP, and is a key enzyme in the biosynthesis of NADP. Catalyzes specifically the phosphorylation on 2'-hydroxyl of the adenosine moiety of NAD to yield NADP. In Methanopyrus kandleri (strain AV19 / DSM 6324 / JCM 9639 / NBRC 100938), this protein is NAD kinase.